The sequence spans 471 residues: Ribulose bisphosphate carboxylase large chain (471 aa).

Substrate is bound by residues Asn115 and Thr165. Lys167 functions as the Proton acceptor in the catalytic mechanism. Lys169 contributes to the substrate binding site. The Mg(2+) site is built by Lys193, Asp195, and Glu196. N6-carboxylysine is present on Lys193. His286 serves as the catalytic Proton acceptor. Positions 287, 319, and 371 each coordinate substrate.

It belongs to the RuBisCO large chain family. Type I subfamily. As to quaternary structure, heterohexadecamer of 8 large chains and 8 small chains. Requires Mg(2+) as cofactor.

The catalysed reaction is 2 (2R)-3-phosphoglycerate + 2 H(+) = D-ribulose 1,5-bisphosphate + CO2 + H2O. It carries out the reaction D-ribulose 1,5-bisphosphate + O2 = 2-phosphoglycolate + (2R)-3-phosphoglycerate + 2 H(+). In terms of biological role, ruBisCO catalyzes two reactions: the carboxylation of D-ribulose 1,5-bisphosphate, the primary event in carbon dioxide fixation, as well as the oxidative fragmentation of the pentose substrate. Both reactions occur simultaneously and in competition at the same active site. The sequence is that of Ribulose bisphosphate carboxylase large chain from Alvinoconcha hessleri symbiotic bacterium.